A 169-amino-acid chain; its full sequence is Vimentin-type intermediate filament-associated coiled-coil protein (169 aa).

Residues 7 to 89 (LQIREANAHL…VHSLQATVHQ (83 aa)) adopt a coiled-coil conformation. Low complexity predominate over residues 126–135 (RLGPLPASDP). The tract at residues 126–169 (RLGPLPASDPGHPPPGGPGPPLDNSTGEEADRDHLQPAVFGTTV) is disordered. Positions 136–146 (GHPPPGGPGPP) are enriched in pro residues.

The protein resides in the cytoplasm. This is Vimentin-type intermediate filament-associated coiled-coil protein (VMAC) from Homo sapiens (Human).